Consider the following 417-residue polypeptide: D-amino acid dehydrogenase (417 aa).

Position 3–17 (3–17 (IVVLGGGVVGVTSAW)) interacts with FAD.

This sequence belongs to the DadA oxidoreductase family. It depends on FAD as a cofactor.

It carries out the reaction a D-alpha-amino acid + A + H2O = a 2-oxocarboxylate + AH2 + NH4(+). It functions in the pathway amino-acid degradation; D-alanine degradation; NH(3) and pyruvate from D-alanine: step 1/1. Functionally, oxidative deamination of D-amino acids. This Aeromonas salmonicida (strain A449) protein is D-amino acid dehydrogenase.